The primary structure comprises 131 residues: Ribosome-binding factor A (131 aa).

It belongs to the RbfA family. In terms of assembly, monomer. Binds 30S ribosomal subunits, but not 50S ribosomal subunits or 70S ribosomes.

It is found in the cytoplasm. Its function is as follows. One of several proteins that assist in the late maturation steps of the functional core of the 30S ribosomal subunit. Associates with free 30S ribosomal subunits (but not with 30S subunits that are part of 70S ribosomes or polysomes). Required for efficient processing of 16S rRNA. May interact with the 5'-terminal helix region of 16S rRNA. The polypeptide is Ribosome-binding factor A (Ruegeria pomeroyi (strain ATCC 700808 / DSM 15171 / DSS-3) (Silicibacter pomeroyi)).